We begin with the raw amino-acid sequence, 280 residues long: Inner kinetochore subunit fta1 (280 aa).

The protein belongs to the CENP-L/IML3 family. Component of the inner kinetochore constitutive centromere-associated network (CCAN) (also known as central kinetochore Sim4 complex in fission yeast), which is composed of at least cnl2, cnp3, cnp20, fta1, fta2, fta3, fta4, fta6, fta7, mal2, mhf1, mhf2, mis6, mis15, mis17, sim4 and wip1.

It localises to the nucleus. It is found in the chromosome. Its subcellular location is the centromere. The protein localises to the kinetochore. In terms of biological role, component of the kinetochore, a multiprotein complex that assembles on centromeric DNA and attaches chromosomes to spindle microtubules, mediating chromosome segregation and sister chromatid segregation during meiosis and mitosis. Component of the inner kinetochore constitutive centromere-associated network (CCAN), which serves as a structural platform for outer kinetochore assembly. The chain is Inner kinetochore subunit fta1 (fta1) from Schizosaccharomyces pombe (strain 972 / ATCC 24843) (Fission yeast).